We begin with the raw amino-acid sequence, 282 residues long: HTH-type transcriptional activator RhaR (282 aa).

The 99-residue stretch at 179–277 (DKLITRLAAS…GMTPSQWRHL (99 aa)) folds into the HTH araC/xylS-type domain. 2 consecutive DNA-binding regions (H-T-H motif) follow at residues 196–217 (DKFC…RQQT) and 244–267 (ISDI…TRET).

In terms of assembly, binds DNA as a dimer.

It is found in the cytoplasm. Functionally, activates expression of the rhaSR operon in response to L-rhamnose. The protein is HTH-type transcriptional activator RhaR of Escherichia coli O139:H28 (strain E24377A / ETEC).